A 227-amino-acid chain; its full sequence is Extracellular small neutral protease (227 aa).

The signal sequence occupies residues Met1–Ala29. A propeptide spanning residues Ala30 to Gly42 is cleaved from the precursor. Ca(2+)-binding residues include Asp156 and Thr158. Residue His163 participates in Zn(2+) binding. Residue Glu164 is part of the active site. Residues His167 and Asp173 each contribute to the Zn(2+) site. Cys179 and Cys192 are disulfide-bonded.

This sequence belongs to the peptidase M7 family. It depends on Ca(2+) as a cofactor. Zn(2+) is required as a cofactor. Post-translationally, the N-terminus is blocked.

It localises to the secreted. It carries out the reaction Hydrolyzes proteins with a preference for Tyr or Phe in the P1' position. Has no action on amino-acid p-nitroanilides.. This Streptomyces lividans protein is Extracellular small neutral protease (snpA).